The primary structure comprises 117 residues: Large ribosomal subunit protein bL20 (117 aa).

The protein belongs to the bacterial ribosomal protein bL20 family.

Functionally, binds directly to 23S ribosomal RNA and is necessary for the in vitro assembly process of the 50S ribosomal subunit. It is not involved in the protein synthesizing functions of that subunit. The sequence is that of Large ribosomal subunit protein bL20 from Campylobacter lari (strain RM2100 / D67 / ATCC BAA-1060).